A 332-amino-acid chain; its full sequence is Glycerol-3-phosphate dehydrogenase [NAD(P)+] (332 aa).

Trp11, Arg30, and Lys108 together coordinate NADPH. Sn-glycerol 3-phosphate is bound by residues Lys108, Gly137, and Ser139. Ala141 contributes to the NADPH binding site. Sn-glycerol 3-phosphate contacts are provided by Lys192, Asp245, Ser255, Arg256, and Asn257. The active-site Proton acceptor is the Lys192. Arg256 contacts NADPH. NADPH-binding residues include Val280 and Glu282.

It belongs to the NAD-dependent glycerol-3-phosphate dehydrogenase family.

The protein localises to the cytoplasm. The enzyme catalyses sn-glycerol 3-phosphate + NAD(+) = dihydroxyacetone phosphate + NADH + H(+). It catalyses the reaction sn-glycerol 3-phosphate + NADP(+) = dihydroxyacetone phosphate + NADPH + H(+). It participates in membrane lipid metabolism; glycerophospholipid metabolism. In terms of biological role, catalyzes the reduction of the glycolytic intermediate dihydroxyacetone phosphate (DHAP) to sn-glycerol 3-phosphate (G3P), the key precursor for phospholipid synthesis. The sequence is that of Glycerol-3-phosphate dehydrogenase [NAD(P)+] from Burkholderia mallei (strain ATCC 23344).